Here is a 285-residue protein sequence, read N- to C-terminus: 3',5'-nucleoside bisphosphate phosphatase (285 aa).

The Mn(2+) site is built by His7, His9, Asp14, His39, Glu64, and His75. Substrate contacts are provided by Asp14 and His39. Residues 99–102 (RLER) and 134–135 (RT) each bind substrate. Residues His191, Asp248, and His250 each coordinate Mn(2+). Residue His250 participates in substrate binding.

Belongs to the PHP family. As to quaternary structure, monomer. The cofactor is Mn(2+).

It carries out the reaction a ribonucleoside 3',5'-bisphosphate + H2O = a ribonucleoside 5'-phosphate + phosphate. Hydrolyzes 3',5'-bisphosphonucleosides (pGp, pCp, pUp, and pIp) to nucleoside 5'-phosphate and orthophosphate. Has similar catalytic efficiencies with all the bases. Also shows activity with ribonucleoside 2'-deoxyribonucleoside 3',5'-bisphosphates. Does not show activity with nucleoside 2',5'-bisphosphates. The sequence is that of 3',5'-nucleoside bisphosphate phosphatase from Chromobacterium violaceum (strain ATCC 12472 / DSM 30191 / JCM 1249 / CCUG 213 / NBRC 12614 / NCIMB 9131 / NCTC 9757 / MK).